The primary structure comprises 436 residues: Trigger factor (436 aa).

Positions 163-248 (GDTVNIDFDG…VNEIKYKDVP (86 aa)) constitute a PPIase FKBP-type domain.

It belongs to the FKBP-type PPIase family. Tig subfamily.

It is found in the cytoplasm. It carries out the reaction [protein]-peptidylproline (omega=180) = [protein]-peptidylproline (omega=0). In terms of biological role, involved in protein export. Acts as a chaperone by maintaining the newly synthesized protein in an open conformation. Functions as a peptidyl-prolyl cis-trans isomerase. In Staphylococcus saprophyticus subsp. saprophyticus (strain ATCC 15305 / DSM 20229 / NCIMB 8711 / NCTC 7292 / S-41), this protein is Trigger factor.